An 80-amino-acid chain; its full sequence is Exodeoxyribonuclease 7 small subunit (80 aa).

It belongs to the XseB family. As to quaternary structure, heterooligomer composed of large and small subunits.

The protein localises to the cytoplasm. It carries out the reaction Exonucleolytic cleavage in either 5'- to 3'- or 3'- to 5'-direction to yield nucleoside 5'-phosphates.. In terms of biological role, bidirectionally degrades single-stranded DNA into large acid-insoluble oligonucleotides, which are then degraded further into small acid-soluble oligonucleotides. This Halalkalibacterium halodurans (strain ATCC BAA-125 / DSM 18197 / FERM 7344 / JCM 9153 / C-125) (Bacillus halodurans) protein is Exodeoxyribonuclease 7 small subunit.